A 1118-amino-acid chain; its full sequence is cGMP-specific 3',5'-cyclic phosphodiesterase (1118 aa).

The interval Met1 to Asp142 is disordered. Residues Ser18–Ser33 are compositionally biased toward low complexity. Positions Lys34–Ile45 are enriched in polar residues. 2 stretches are compositionally biased toward low complexity: residues Ser46–Ala56 and Gly63–Gly72. A compositionally biased stretch (polar residues) spans Ser84–Met101. The segment covering Thr102–Gln128 has biased composition (low complexity). 2 GAF domains span residues Asp247–Ile399 and Asn431–Ile612. The PDEase domain maps to Ser642–Val965. His718 acts as the Proton donor in catalysis. Residues His722, His758, Asp759, and Asp869 each coordinate a divalent metal cation. Disordered stretches follow at residues Gln1006–Leu1035 and Ser1065–Leu1118. 2 stretches are compositionally biased toward basic and acidic residues: residues Gly1011–Arg1022 and Ser1065–Ser1075. The segment covering Ala1084–Met1104 has biased composition (low complexity). Positions Ser1108 to Leu1118 are enriched in basic residues. Cysteine methyl ester is present on Cys1115. A lipid anchor (S-farnesyl cysteine) is attached at Cys1115. A propeptide spans Ala1116 to Leu1118 (removed in mature form).

It belongs to the cyclic nucleotide phosphodiesterase family. Interacts with PrBP. The cofactor is a divalent metal cation. Expressed in Malpighian tubule principal cells. Also expressed in adult head.

The protein resides in the cell membrane. It carries out the reaction 3',5'-cyclic GMP + H2O = GMP + H(+). With respect to regulation, inhibited by sildenafil and zaprinast. In terms of biological role, hydrolyzes the second messenger cGMP, which is a key regulator of many important physiological processes. Has cAMP phosphodiesterase activity in vitro but not in vivo. Has a role regulating cGMP transport in Malpighian tubule principal cells. In Drosophila melanogaster (Fruit fly), this protein is cGMP-specific 3',5'-cyclic phosphodiesterase (Pde6).